The sequence spans 152 residues: Deoxyuridine 5'-triphosphate nucleotidohydrolase (152 aa).

Residues 71-73, asparagine 84, 88-90, and methionine 98 each bind substrate; these read RSG and LID.

It belongs to the dUTPase family. Mg(2+) is required as a cofactor.

The enzyme catalyses dUTP + H2O = dUMP + diphosphate + H(+). Its pathway is pyrimidine metabolism; dUMP biosynthesis; dUMP from dCTP (dUTP route): step 2/2. Functionally, this enzyme is involved in nucleotide metabolism: it produces dUMP, the immediate precursor of thymidine nucleotides and it decreases the intracellular concentration of dUTP so that uracil cannot be incorporated into DNA. This chain is Deoxyuridine 5'-triphosphate nucleotidohydrolase, found in Shigella flexneri.